The following is a 421-amino-acid chain: UDP-N-acetylglucosamine 1-carboxyvinyltransferase (421 aa).

22 to 23 is a phosphoenolpyruvate binding site; that stretch reads KN. R93 is a binding site for UDP-N-acetyl-alpha-D-glucosamine. The Proton donor role is filled by C117. C117 is modified (2-(S-cysteinyl)pyruvic acid O-phosphothioketal). UDP-N-acetyl-alpha-D-glucosamine contacts are provided by residues 122 to 126, D308, and I330; that span reads RPVDL.

Belongs to the EPSP synthase family. MurA subfamily.

It is found in the cytoplasm. The catalysed reaction is phosphoenolpyruvate + UDP-N-acetyl-alpha-D-glucosamine = UDP-N-acetyl-3-O-(1-carboxyvinyl)-alpha-D-glucosamine + phosphate. It participates in cell wall biogenesis; peptidoglycan biosynthesis. In terms of biological role, cell wall formation. Adds enolpyruvyl to UDP-N-acetylglucosamine. This is UDP-N-acetylglucosamine 1-carboxyvinyltransferase from Pseudomonas entomophila (strain L48).